Reading from the N-terminus, the 139-residue chain is Large ribosomal subunit protein uL16 (139 aa).

The tract at residues 74 to 94 (LTKKPAETRQGSGKGSPESWV) is disordered.

It belongs to the universal ribosomal protein uL16 family. Part of the 50S ribosomal subunit.

Binds 23S rRNA and is also seen to make contacts with the A and possibly P site tRNAs. This chain is Large ribosomal subunit protein uL16, found in Saccharopolyspora erythraea (strain ATCC 11635 / DSM 40517 / JCM 4748 / NBRC 13426 / NCIMB 8594 / NRRL 2338).